The following is a 111-amino-acid chain: Colipase (111 aa).

An N-terminal signal peptide occupies residues methionine 1 to alanine 17. A propeptide spans alanine 18 to arginine 22 (enterostatin, activation peptide). 5 cysteine pairs are disulfide-bonded: cysteine 34–cysteine 45, cysteine 40–cysteine 56, cysteine 44–cysteine 78, cysteine 66–cysteine 86, and cysteine 80–cysteine 104.

This sequence belongs to the colipase family. As to quaternary structure, forms a 1:1 stoichiometric complex with pancreatic lipase. In terms of tissue distribution, expressed by the pancreas.

The protein resides in the secreted. Its function is as follows. Colipase is a cofactor of pancreatic lipase. It allows the lipase to anchor itself to the lipid-water interface. Without colipase the enzyme is washed off by bile salts, which have an inhibitory effect on the lipase. Enterostatin has a biological activity as a satiety signal. This is Colipase (CLPS) from Myocastor coypus (Coypu).